The primary structure comprises 97 residues: Co-chaperonin GroES (97 aa).

It belongs to the GroES chaperonin family. As to quaternary structure, heptamer of 7 subunits arranged in a ring. Interacts with the chaperonin GroEL.

The protein resides in the cytoplasm. Its function is as follows. Together with the chaperonin GroEL, plays an essential role in assisting protein folding. The GroEL-GroES system forms a nano-cage that allows encapsulation of the non-native substrate proteins and provides a physical environment optimized to promote and accelerate protein folding. GroES binds to the apical surface of the GroEL ring, thereby capping the opening of the GroEL channel. The sequence is that of Co-chaperonin GroES from Pseudomonas savastanoi pv. phaseolicola (strain 1448A / Race 6) (Pseudomonas syringae pv. phaseolicola (strain 1448A / Race 6)).